Here is a 410-residue protein sequence, read N- to C-terminus: Ribosomal RNA large subunit methyltransferase G (410 aa).

It belongs to the methyltransferase superfamily. RlmG family.

Its subcellular location is the cytoplasm. The enzyme catalyses guanosine(1835) in 23S rRNA + S-adenosyl-L-methionine = N(2)-methylguanosine(1835) in 23S rRNA + S-adenosyl-L-homocysteine + H(+). Functionally, specifically methylates the guanine in position 1835 (m2G1835) of 23S rRNA. The chain is Ribosomal RNA large subunit methyltransferase G from Alteromonas mediterranea (strain DSM 17117 / CIP 110805 / LMG 28347 / Deep ecotype).